Consider the following 132-residue polypeptide: Insulin-like 3 (132 aa).

A signal peptide spans 1–24; it reads MSPRPLAWALVLLGAALAVALALG. 3 disulfide bridges follow: Cys36–Cys117, Cys48–Cys130, and Cys116–Cys121. Residues 61–104 constitute a propeptide, c peptide like; the sequence is VAGGDRELLQWLEGRHLHGQVSDGDPMLVLVPQALPQASLHHHH.

Belongs to the insulin family. As to quaternary structure, heterodimer of a B chain and an A chain linked by two disulfide bonds. As to expression, more strongly expressed in testis than in ovary.

The protein localises to the secreted. In terms of biological role, seems to play a role in testicular function. May be a trophic hormone with a role in testicular descent in fetal life. Is a ligand for LGR8 receptor. This is Insulin-like 3 (INSL3) from Canis lupus familiaris (Dog).